Consider the following 374-residue polypeptide: 4-hydroxy-3-methylbut-2-en-1-yl diphosphate synthase (flavodoxin) (374 aa).

4 residues coordinate [4Fe-4S] cluster: Cys-268, Cys-271, Cys-303, and Glu-310.

It belongs to the IspG family. The cofactor is [4Fe-4S] cluster.

It catalyses the reaction (2E)-4-hydroxy-3-methylbut-2-enyl diphosphate + oxidized [flavodoxin] + H2O + 2 H(+) = 2-C-methyl-D-erythritol 2,4-cyclic diphosphate + reduced [flavodoxin]. It participates in isoprenoid biosynthesis; isopentenyl diphosphate biosynthesis via DXP pathway; isopentenyl diphosphate from 1-deoxy-D-xylulose 5-phosphate: step 5/6. Its function is as follows. Converts 2C-methyl-D-erythritol 2,4-cyclodiphosphate (ME-2,4cPP) into 1-hydroxy-2-methyl-2-(E)-butenyl 4-diphosphate. In Geobacillus kaustophilus (strain HTA426), this protein is 4-hydroxy-3-methylbut-2-en-1-yl diphosphate synthase (flavodoxin).